Consider the following 309-residue polypeptide: Golgi-associated RAB2 interactor protein 1A (309 aa).

Phosphoserine occurs at positions 231, 263, and 267.

This sequence belongs to the GARIN family. Interacts (via N-terminus) with RAB2B (in GTP-bound form).

The protein localises to the golgi apparatus. RAB2B effector protein required for accurate acrosome formation and normal male fertility. This is Golgi-associated RAB2 interactor protein 1A from Homo sapiens (Human).